Here is a 708-residue protein sequence, read N- to C-terminus: MLKLFSAFRKNKIWDFNGGIHPPEMKTQSNGTPLRQVPLAQRFVIPLKQHIGAEGELCVSVGDKVLRGQPLTRGRGKMLPVHAPTSGTVTAIAPHSTAHPSALAELSVIIDADGEDCWIPRDGWADYRSRSREELIERIHQFGVAGLGGAGFPTGVKLQGGGDKIETLIINAAECEPYITADDRLMQDCAAQVVEGIRILAHILQPREILIGIEDNKPQAISMLRAVLADSHDISLRVIPTKYPSGGAKQLTYILTGKQVPHGGRSSDIGVLMQNVGTAYAVKRAVIDGEPITERVVTLTGEAIARPGNVWARLGTPVRHLLNDAEFCPSADQMVIMGGPLMGFTLPWLDVPVVKITNCLLAPSANELGEPQEEQSCIRCSACADACPADLLPQQLYWFSKGQQHDKATTHNIADCIECGACAWVCPSNIPLVQYFRQEKAEIAAIRQEEKRAAEAKARFEARQARLEREKAARLERHKSAAVQPAAKDKDAIAAALARVKEKQAQATQPIVIKAGERPDNSAIIAAREARKAQARAKQAELQQTNDAATVADPRKTAVEAAIARAKARKLEQQQANAEPEEQIDPRKAAVEAAIARAKARKLEQQQANAEPEEQIDPRKAAVEAAIARAKARKLEQQQANAEPEEQIDPRKAAVEAAIARAKARKLEQQQANAEPEEQIDPRKAAVAAAIARVQAKKAAQQKVVNED.

2 4Fe-4S ferredoxin-type domains span residues 369–397 (GEPQ…QQLY) and 407–436 (KATT…VQYF). [4Fe-4S] cluster is bound by residues Cys377, Cys380, Cys383, Cys387, Cys416, Cys419, Cys422, and Cys426. Residues 630 to 682 (AKARKLEQQQANAEPEEQIDPRKAAVEAAIARAKARKLEQQQANAEPEEQIDP) form a disordered region.

The protein belongs to the 4Fe4S bacterial-type ferredoxin family. RnfC subfamily. The complex is composed of six subunits: RsxA, RsxB, RsxC, RsxD, RsxE and RsxG. Requires [4Fe-4S] cluster as cofactor.

It is found in the cell inner membrane. Part of a membrane-bound complex that couples electron transfer with translocation of ions across the membrane. Required to maintain the reduced state of SoxR. This is Ion-translocating oxidoreductase complex subunit C from Escherichia coli O1:K1 / APEC.